The sequence spans 222 residues: MADS-box transcription factor 26 (222 aa).

An MADS-box domain is found at 1 to 61 (MARGKVQLRR…GKLYDLATTG (61 aa)). Residues 85 to 176 (RMDPKQEAMV…QEKIVEQNGL (92 aa)) enclose the K-box domain.

It is found in the nucleus. In terms of biological role, probable transcription factor. The chain is MADS-box transcription factor 26 (MADS26) from Oryza sativa subsp. indica (Rice).